A 309-amino-acid chain; its full sequence is uncharacterized protein (309 aa).

This sequence to S.pombe SpAC14C4.04.

This is an uncharacterized protein from Schizosaccharomyces pombe (strain 972 / ATCC 24843) (Fission yeast).